We begin with the raw amino-acid sequence, 99 residues long: Small ribosomal subunit protein uS19 (99 aa).

The protein belongs to the universal ribosomal protein uS19 family.

Protein S19 forms a complex with S13 that binds strongly to the 16S ribosomal RNA. In Sulfurihydrogenibium sp. (strain YO3AOP1), this protein is Small ribosomal subunit protein uS19.